A 46-amino-acid chain; its full sequence is Apamin (46 aa).

The first 27 residues, 1-27 (MISMLRCIYLFLSVILITSYFVTPVMP), serve as a signal peptide directing secretion. Intrachain disulfides connect cysteine 28/cysteine 38 and cysteine 30/cysteine 42. Residues 40–41 (RR) form an essential for toxin activity region. Histidine 45 is modified (histidine amide).

Expressed by the venom gland.

It localises to the secreted. Its function is as follows. Toxin with unique selectivity to KCa2 channels. Potently blocks human, rat and mouse KCa2.2/KCNN2/SK2 channels (IC(50)=27-140 pM), and moderately blocks human and rat KCa2.3/KCNN3/SK3 channels (IC(50)=0.6-4 nM), and human (IC(50)=0.7-12 nM) and mouse (IC(50)=28 nM) KCa2.1/KCNN1/SK1 channels. Does not show any antimicrobial activity. In vivo, intracerebroventricular injection into rats of a dose of 1 ng results in neurodegeneration specifically in the Purkinje cells of the cerebellum, and induces seizures characterized by hypersensitivity to noise, loss of postural control, paroxystic jerking, and alternating periods of great agitation with tonic-clonic convulsions and periods of total prostration. When administered at high doses, exerts anti-inflammatory, anti-oxidative, anti-fibrotic and anti-apoptotic properties in several models of inflammatory disease, including gouty arthritis, atherosclerosis, atopic dermatitis and acute kidney injury. Down-regulates pro-inflammatory signaling pathways, such as the NF-kappaB and STAT3 pathways, probably by blocking SK channels such as KCa2.2/KCNN2/SK2 and/or KCa2.3/KCNN3/SK3 which are thought to be involved in promoting some inflammatory responses. For example in mouse and rat microglia cells, inhibits LPS-activated KCa2.2/KCNN2/SK2 channels and TLR4 expression leading to the down-regulation of the NF-kappaB, STAT, and MAPK/ERK signaling pathways and, as a consequence, decreases secretion of pro-inflammatory cytokines. The chain is Apamin from Apis mellifera (Honeybee).